A 484-amino-acid polypeptide reads, in one-letter code: Aldehyde dehydrogenase family 3 member A2 (484 aa).

Residues Met-1–Arg-463 are Cytoplasmic-facing. Gly-185–Gly-190 contributes to the NAD(+) binding site. Active-site residues include Glu-207 and Cys-241. Ser-293 carries the phosphoserine modification. Residues Leu-464–Leu-484 form a helical membrane-spanning segment. Residues Lys-481–Leu-484 carry the Prevents secretion from ER motif.

Belongs to the aldehyde dehydrogenase family. In terms of assembly, homodimer.

The protein resides in the membrane. It is found in the microsome membrane. Its subcellular location is the endoplasmic reticulum membrane. It carries out the reaction an aldehyde + NAD(+) + H2O = a carboxylate + NADH + 2 H(+). The catalysed reaction is a fatty aldehyde + NAD(+) + H2O = a fatty acid + NADH + 2 H(+). The enzyme catalyses hexadecanoate + NADH + 2 H(+) = hexadecanal + NAD(+) + H2O. It catalyses the reaction octanal + NAD(+) + H2O = octanoate + NADH + 2 H(+). It carries out the reaction (2E)-hexadecenal + NAD(+) + H2O = (E)-hexadec-2-enoate + NADH + 2 H(+). The catalysed reaction is 22-oxodocosanoate + NAD(+) + H2O = docosanedioate + NADH + 2 H(+). The enzyme catalyses 2,6,10,14-tetramethylpentadecanal + NAD(+) + H2O = 2,6,10,14-tetramethylpentadecanoate + NADH + 2 H(+). It catalyses the reaction octadecanal + NAD(+) + H2O = octadecanoate + NADH + 2 H(+). It carries out the reaction dodecanoate + NADH + 2 H(+) = dodecanal + NAD(+) + H2O. The catalysed reaction is decanal + NAD(+) + H2O = decanoate + NADH + 2 H(+). The enzyme catalyses tetradecanal + NAD(+) + H2O = tetradecanoate + NADH + 2 H(+). It catalyses the reaction heptanal + NAD(+) + H2O = heptanoate + NADH + 2 H(+). It carries out the reaction (2E,6E)-farnesal + NAD(+) + H2O = (2E,6E)-farnesoate + NADH + 2 H(+). Its function is as follows. Catalyzes the oxidation of medium and long-chain aliphatic aldehydes to fatty acids. Active on a variety of saturated and unsaturated aliphatic aldehydes between 6 and 24 carbons in length. Responsible for conversion of the sphingosine 1-phosphate (S1P) degradation product hexadecenal to hexadecenoic acid. The polypeptide is Aldehyde dehydrogenase family 3 member A2 (Aldh3a2) (Mus musculus (Mouse)).